The chain runs to 437 residues: UDP-N-acetylmuramoylalanine--D-glutamate ligase (437 aa).

115–121 provides a ligand contact to ATP; the sequence is GSNGKST.

Belongs to the MurCDEF family.

It localises to the cytoplasm. It catalyses the reaction UDP-N-acetyl-alpha-D-muramoyl-L-alanine + D-glutamate + ATP = UDP-N-acetyl-alpha-D-muramoyl-L-alanyl-D-glutamate + ADP + phosphate + H(+). It functions in the pathway cell wall biogenesis; peptidoglycan biosynthesis. Cell wall formation. Catalyzes the addition of glutamate to the nucleotide precursor UDP-N-acetylmuramoyl-L-alanine (UMA). The protein is UDP-N-acetylmuramoylalanine--D-glutamate ligase of Vibrio campbellii (strain ATCC BAA-1116).